The sequence spans 154 residues: Transcriptional repressor NrdR (154 aa).

A zinc finger spans residues 3–34 (CPHCHKNGSRVVDSRPSEDGSFIRRRRECIHC). In terms of domain architecture, ATP-cone spans 49–139 (LLVIKKDGTR…VYRQFKDVDA (91 aa)).

This sequence belongs to the NrdR family. The cofactor is Zn(2+).

In terms of biological role, negatively regulates transcription of bacterial ribonucleotide reductase nrd genes and operons by binding to NrdR-boxes. In Limosilactobacillus reuteri (strain DSM 20016) (Lactobacillus reuteri), this protein is Transcriptional repressor NrdR.